Reading from the N-terminus, the 475-residue chain is BTB/POZ domain-containing protein 10 (475 aa).

The interval methionine 1–cysteine 143 is disordered. Residues leucine 22 to lysine 31 show a composition bias toward basic residues. The span at glycine 57–glutamate 80 shows a compositional bias: basic and acidic residues. Residues serine 81–threonine 94 show a composition bias toward polar residues. The span at histidine 97–serine 107 shows a compositional bias: basic and acidic residues. A compositionally biased stretch (low complexity) spans serine 108 to serine 142. The segment at alanine 146–leucine 475 is interaction with AKT family members. A BTB domain is found at glutamate 167–aspartate 241. The tract at residues leucine 455–leucine 475 is disordered.

In terms of assembly, interacts (via C-terminal 330-amino-acid region) with AKT1; AKT2 and AKT3. Interacts with PPP2CA and PPP1CA. In terms of tissue distribution, ubiquitously expressed. Highly expressed in adult brain, testis, aorta and small intestine and weakly expressed in the heart, lung, liver, kidney, pancreas, spleen, thymus, prostate, ovary and colon. Down-regulated in glioma.

It is found in the nucleus. It localises to the cytoplasm. Functionally, plays a major role as an activator of AKT family members by inhibiting PPP2CA-mediated dephosphorylation, thereby keeping AKTs activated. Plays a role in preventing motor neuronal death and accelerating the growth of pancreatic beta cells. The chain is BTB/POZ domain-containing protein 10 (BTBD10) from Homo sapiens (Human).